Here is a 138-residue protein sequence, read N- to C-terminus: Ribonuclease VapC21 (138 aa).

The region spanning 6-128 (LLDKSAAYRA…ERIAAITRQP (123 aa)) is the PINc domain. Mg(2+) is bound by residues Asp8 and Asp97.

Belongs to the PINc/VapC protein family. Mg(2+) serves as cofactor.

Toxic component of a type II toxin-antitoxin (TA) system. An RNase. Its toxic effect is neutralized by coexpression with cognate antitoxin VapB21. The protein is Ribonuclease VapC21 of Mycobacterium tuberculosis (strain CDC 1551 / Oshkosh).